The sequence spans 406 residues: MQTLESTLNPPATASEFDTTIHRRKTRPVQVGSVTIGGGHPVVVQSMINEDTLDIDGSVAGIRRLHEIGCEIVRVTVPSLVHATALAKIREKLLATYQPVPLVADVHHNGMKIALEVAKHVDKVRINPGLYVFEKPKADRSEYSQAEFDEIGEKIAETLKPLVVSLRDQDKAMRIGVNHGSLAERMLFTYGDTPEGMVQSALEFIRICESLDFRNLVVSLKASRVPVMVAAYRLMVKRMDELGMDYPLHLGVTEAGDGEYGRIKSTAGIATLLADGIGDTIRVSLTEAPEKEIPVCYSILQALGLRKTMVEYVACPSCGRTLFNLEDVLQQVRAATQHLTGLDIAVMGCIVNGPGEMADADYGYVGKQAGYISLYRGREEIKRVPESEGVSELINLIKADGRWVEP.

Residues Cys-315, Cys-318, Cys-349, and Glu-356 each contribute to the [4Fe-4S] cluster site.

The protein belongs to the IspG family. The cofactor is [4Fe-4S] cluster.

The catalysed reaction is (2E)-4-hydroxy-3-methylbut-2-enyl diphosphate + 2 oxidized [2Fe-2S]-[ferredoxin] + H2O = 2-C-methyl-D-erythritol 2,4-cyclic diphosphate + 2 reduced [2Fe-2S]-[ferredoxin] + H(+). It functions in the pathway isoprenoid biosynthesis; isopentenyl diphosphate biosynthesis via DXP pathway; isopentenyl diphosphate from 1-deoxy-D-xylulose 5-phosphate: step 5/6. Its function is as follows. Converts 2C-methyl-D-erythritol 2,4-cyclodiphosphate (ME-2,4cPP) into 1-hydroxy-2-methyl-2-(E)-butenyl 4-diphosphate. The polypeptide is 4-hydroxy-3-methylbut-2-en-1-yl diphosphate synthase (ferredoxin) (Microcystis aeruginosa (strain NIES-843 / IAM M-2473)).